The chain runs to 400 residues: Elongation factor Tu-B (400 aa).

One can recognise a tr-type G domain in the interval 10 to 209 (KPHVNVGTIG…VVDEYIPTPE (200 aa)). The tract at residues 19 to 26 (GHVDHGKT) is G1. Residue 19–26 (GHVDHGKT) coordinates GTP. A Mg(2+)-binding site is contributed by Thr26. The segment at 60 to 64 (GITIN) is G2. The tract at residues 81-84 (DCPG) is G3. Residues 81-85 (DCPGH) and 136-139 (NKAD) each bind GTP. The G4 stretch occupies residues 136–139 (NKAD). Positions 174-176 (SAL) are G5.

It belongs to the TRAFAC class translation factor GTPase superfamily. Classic translation factor GTPase family. EF-Tu/EF-1A subfamily. As to quaternary structure, monomer.

It is found in the cytoplasm. It catalyses the reaction GTP + H2O = GDP + phosphate + H(+). In terms of biological role, GTP hydrolase that promotes the GTP-dependent binding of aminoacyl-tRNA to the A-site of ribosomes during protein biosynthesis. In Caldanaerobacter subterraneus subsp. tengcongensis (strain DSM 15242 / JCM 11007 / NBRC 100824 / MB4) (Thermoanaerobacter tengcongensis), this protein is Elongation factor Tu-B.